The primary structure comprises 1407 residues: Trichohyalin (1407 aa).

The segment at 1–91 (MSPLLKSIID…AQAAYYALGQ (91 aa)) is S-100-like. EF-hand domains follow at residues 23–48 (CDGA…LQRP) and 49–84 (HDPE…LAQA). Asp32, Asp62, Asp64, Asp66, and Glu73 together coordinate Ca(2+). Disordered stretches follow at residues 148–172 (EEEE…DKEQ), 218–237 (LREE…RALQ), 362–471 (REQA…EEEQ), 486–587 (EQLQ…ERER), 1014–1033 (REEE…EEER), 1062–1082 (KEEK…EEQQ), and 1313–1407 (EQFA…QYRP). Basic and acidic residues-rich tracts occupy residues 362-381 (REQA…RQLE), 396-424 (RRQE…EQAR), 447-471 (SLRE…EEEQ), and 554-587 (QREK…ERER). The segment covering 1313–1376 (EQFAREEKSR…FREDQSRRQV (64 aa)) has biased composition (basic and acidic residues).

The protein belongs to the S100-fused protein family. Homodimer. Substrate of transglutaminase. Some 200 arginines are probably converted to citrullines by peptidylarginine deimidase. In terms of tissue distribution, found in the hard keratinizing tissues such as the inner root sheath (IRS) of hair follicles and medulla, and in the filiform papillae of dorsal tongue epithelium.

Intermediate filament-associated protein that associates in regular arrays with keratin intermediate filaments (KIF) of the inner root sheath cells of the hair follicle and the granular layer of the epidermis. It later becomes cross-linked to KIF by isodipeptide bonds. It may serve as scaffold protein, together with involucrin, in the organization of the cell envelope or even anchor the cell envelope to the KIF network. It may be involved in its own calcium-dependent postsynthetic processing during terminal differentiation. The polypeptide is Trichohyalin (TCHH) (Oryctolagus cuniculus (Rabbit)).